Consider the following 67-residue polypeptide: uncharacterized protein (67 aa).

The next 2 membrane-spanning stretches (helical) occupy residues Glu10–Trp30 and Leu40–Phe60.

It belongs to the plectrovirus ORF10 family.

Its subcellular location is the host membrane. This is an uncharacterized protein from Spiroplasma citri (SpV1).